The following is a 728-amino-acid chain: Ubiquitin carboxyl-terminal hydrolase BAP1 (728 aa).

Residues 4-235 (GWLELESDPG…IRFNLMAVVP (232 aa)) form the UCH catalytic domain. An Arg-finger motif motif is present at residues 56 to 60 (RRSRR). Catalysis depends on Cys91, which acts as the Nucleophile. The active-site Proton donor is His169. Residues 273–333 (THKSQESQLP…TTHSPPSKCK (61 aa)) form a disordered region. At Ser292 the chain carries Phosphoserine. The short motif at 363-366 (NHNY) is the HBM-like motif element. Ser369 and Ser395 each carry phosphoserine. Disordered regions lie at residues 372–436 (QEEE…DGQL) and 463–523 (SIKT…SPVT). Over residues 395–408 (SEDEDDYEDEDEDV) the composition is skewed to acidic residues. 2 stretches are compositionally biased toward polar residues: residues 427 to 436 (SLSNSSDGQL) and 479 to 523 (THSQ…SPVT). Phosphothreonine is present on Thr492. Residues Ser520, Ser536, and Ser584 each carry the phosphoserine modification. Residues 574–623 (LTEGGKGSSPSTRSSQGSQGSSGLEEKEVVEVTESRDKPGLNRSSEPLSG) form a disordered region. Low complexity predominate over residues 581-596 (SSPSTRSSQGSQGSSG). The interaction with BRCA1 stretch occupies residues 595-720 (SGLEEKEVVE…QRKPDRRKRS (126 aa)). Residues 597–613 (LEEKEVVEVTESRDKPG) show a composition bias toward basic and acidic residues. Residues 629–660 (KELLALLKCVEAEIANYEACLKEEVEKRKKFK) are a coiled coil. The interval 641-685 (EIANYEACLKEEVEKRKKFKIDDQRRTHNYDEFICTFISMLAQEG) is interaction with YY1. Residues 669-697 (NYDEFICTFISMLAQEGMLANLVEQNISV) enclose the ULD domain. Residues 698–700 (RRR) are interaction with nucleosomal DNA forming a DNA clamp with ASXL1. A Classical bipartite Nuclear localization signal (NLS) motif is present at residues 698 to 721 (RRRQGVSIGRLHKQRKPDRRKRSR). Residues 702–728 (GVSIGRLHKQRKPDRRKRSRPYKAKRQ) form a disordered region. The segment at 712 to 728 (RKPDRRKRSRPYKAKRQ) is positively charged C-terminal extension (CTE). Residues 716–721 (RRKRSR) carry the Nuclear localization signal motif. The Non-classical PY-nuclear localization signal (PY-NLS) signature appears at 716 to 723 (RRKRSRPY).

This sequence belongs to the peptidase C12 family. BAP1 subfamily. Core component of the polycomb repressive deubiquitinase (PR-DUB) complex, at least composed of BAP1, one of ASXL1, ASXL2 or (probably) ASXL3, and one of MBD5 or MBD6. The PR-DUB core associates with a number of accessory proteins, including FOXK1, FOXK2, KDM1B, HCFC1, YY1 and OGT; KDM1B specifically associates with ASXL2 PR-DUB complexes. The BAP1 deubiquitinase activity is not required for PR-DUB assembly. Homodimerizes (via coiled-coil hinge-region between the UCH and ULD domains) to mediate assembly of 2 copies of the BAP1-ASXL heterodimer into a bisymmetric tetramer; dimerization enhances association with nucleosomes. The PR-DUB complex associates with nucleosomes to mediate deubiquitination of 'lys-120' of histone H2AK118ub1 substrates; the association requires the positively charged C-terminal tail of BAP1. Interacts (via ULD domain) with ASXL1 (via DEUBAD domain); the interaction is direct and forms a ubiquitin binding cleft. The interaction with ASXL1 stabilizes BAP1 but is not required for nucleosome binding. Associates (via C-terminus) with nucleosome and chromatosome complexes through direct interaction with DNA and the histone3/4 dimer; this association displaces the histone-2A C-terminal tail, extending and orienting the H2AK118ub1 substrate towards the BAP1 deubiquitinase active site. Also interacts (via arginine finger) directly with the histone H2A-H2B acidic patch; this interaction is not critical for nucleosome-chromatosome association but may play a role in orienting the H2AK118ub1 substrate towards the PR-DUB complex active site. Interacts with BRCA1 (via the RING finger). Interacts (via HBM-like motif) with HCFC1. Interacts (via a C-terminal region overlapping the ULD domain) with YY1; the interaction is direct and requires the interaction with HCFC1. Interacts (when phosphorylated at Thr-492) with FOXK1. Interacts (when phosphorylated at Thr-492) with FOXK2; leading to recruitment of the PR-DUB complex and repression of FOXK2 target genes. Interacts (via non-classical PY-NLS) with TNPO1/transportin-1 (via HEAT repeats 8-12); the interaction is direct, mediates BAP1 nuclear localization and disrupts BAP1 homodimerization. Interacts (via C-terminus) with KPNA1/importin alpha5 and KPNA2/importin alpha1; these interactions can contribute to BAP1 nuclear localization but are less important than the interaction with TNPO1/transportin-1. The interaction with TNPO1/transportin-1 disrupts homodimerization and blocks ubiquitination by UBE2O. In terms of processing, ubiquitinated: monoubiquitinated at multiple sites within its nuclear localization signal (NLS) BY UBE2O, leading to cytoplasmic retention. Able to mediate autodeubiquitination via intramolecular interactions to counteract cytoplasmic retention. Monoubiquitinated on at least 4 sites near or within its PY-NLS. In terms of tissue distribution, highly expressed in mammary glands, testis and ovary. Up-regulated in mammary glands during puberty, pregnancy, and as a result of parity.

It localises to the cytoplasm. The protein localises to the nucleus. It is found in the chromosome. The enzyme catalyses Thiol-dependent hydrolysis of ester, thioester, amide, peptide and isopeptide bonds formed by the C-terminal Gly of ubiquitin (a 76-residue protein attached to proteins as an intracellular targeting signal).. Its function is as follows. Deubiquitinating enzyme that plays a key role in chromatin by mediating deubiquitination of histone H2A and HCFC1. Catalytic component of the polycomb repressive deubiquitinase (PR-DUB) complex, a complex that specifically mediates deubiquitination of histone H2A monoubiquitinated at 'Lys-120' (H2AK119ub1). Does not deubiquitinate monoubiquitinated histone H2B. The PR-DUB complex is an epigenetic regulator of gene expression and acts as a transcriptional coactivator, affecting genes involved in development, cell communication, signaling, cell proliferation and cell viability. Antagonizes PRC1 mediated H2AK119ub1 monoubiquitination. As part of the PR-DUB complex, associates with chromatin enriched in histone marks H3K4me1, H3K4me3, and H3K27Ac, but not in H3K27me3. Acts as a regulator of cell growth by mediating deubiquitination of HCFC1 N-terminal and C-terminal chains, with some specificity toward 'Lys-48'-linked polyubiquitin chains compared to 'Lys-63'-linked polyubiquitin chains. Deubiquitination of HCFC1 does not lead to increase stability of HCFC1. Interferes with the BRCA1 and BARD1 heterodimer activity by inhibiting their ability to mediate ubiquitination and autoubiquitination. It however does not mediate deubiquitination of BRCA1 and BARD1. Able to mediate autodeubiquitination via intramolecular interactions to counteract monoubiquitination at the nuclear localization signal (NLS), thereby protecting it from cytoplasmic sequestration. Negatively regulates epithelial-mesenchymal transition (EMT) of trophoblast stem cells during placental development by regulating genes involved in epithelial cell integrity, cell adhesion and cytoskeletal organization. This is Ubiquitin carboxyl-terminal hydrolase BAP1 (Bap1) from Mus musculus (Mouse).